Consider the following 123-residue polypeptide: MPTIQQLIRTERSKVQKKTKSPALKQCPQRRGVCTRVYTTTPKKPNSALRKVARVRLTSGFEVTAYIPGIGHNLQEHSVVLIRGGRVKDLPGVRYHIIRGTLDATGVKDRKQGRSKYGTKRPK.

Residues 1-28 are disordered; sequence MPTIQQLIRTERSKVQKKTKSPALKQCP. Position 89 is a 3-methylthioaspartic acid (Asp-89). The disordered stretch occupies residues 104–123; the sequence is ATGVKDRKQGRSKYGTKRPK. Over residues 113 to 123 the composition is skewed to basic residues; that stretch reads GRSKYGTKRPK.

The protein belongs to the universal ribosomal protein uS12 family. Part of the 30S ribosomal subunit. Contacts proteins S8 and S17. May interact with IF1 in the 30S initiation complex.

In terms of biological role, with S4 and S5 plays an important role in translational accuracy. Functionally, interacts with and stabilizes bases of the 16S rRNA that are involved in tRNA selection in the A site and with the mRNA backbone. Located at the interface of the 30S and 50S subunits, it traverses the body of the 30S subunit contacting proteins on the other side and probably holding the rRNA structure together. The combined cluster of proteins S8, S12 and S17 appears to hold together the shoulder and platform of the 30S subunit. The sequence is that of Small ribosomal subunit protein uS12 from Gloeothece citriformis (strain PCC 7424) (Cyanothece sp. (strain PCC 7424)).